Here is a 771-residue protein sequence, read N- to C-terminus: Solute carrier family 7 member 14 (771 aa).

6 helical membrane passes run 58–78 (LISL…SGLV), 83–103 (AGPG…LSGV), 130–150 (FVAF…TAAG), 187–207 (YPDL…ALGV), 216–236 (VLNV…FFFI), and 251–271 (WSGV…FDII). N282 carries an N-linked (GlcNAc...) asparagine glycan. Helical transmembrane passes span 291–311 (ASLV…TLMV), 336–356 (FVVA…SLFP), 360–380 (VIYA…VSSY), 384–404 (PVVA…LVSL), and 407–427 (LIEM…VCVL). A phosphoserine mark is found at S465, S468, and S488. Helical transmembrane passes span 565–585 (VTIC…FIIF), 596–616 (WAIL…FVIL), 628–648 (MAPC…YLML), and 655–675 (WIRF…YGIW). N676 carries N-linked (GlcNAc...) asparagine glycosylation. Residues 712–771 (TEGESQENWGGPAEDKGFYYQQMSDTQPNTRTSSKAKSKSKHKQNSEALIANDELDYSPE) are disordered. Over residues 732–743 (QQMSDTQPNTRT) the composition is skewed to polar residues. Residues 745 to 754 (SKAKSKSKHK) show a composition bias toward basic residues. 2 positions are modified to phosphoserine: S757 and S769.

The protein belongs to the amino acid-polyamine-organocation (APC) superfamily. Cationic amino acid transporter (CAT) (TC 2.A.3.3) family.

It is found in the lysosome membrane. The enzyme catalyses 4-aminobutanoate(in) = 4-aminobutanoate(out). In terms of biological role, imports 4-aminobutanoate (GABA) into lysosomes. May act as a GABA sensor that regulates mTORC2-dependent INS signaling and gluconeogenesis. The transport mechanism and substrate selectivity remain to be elucidated. This is Solute carrier family 7 member 14 from Bos taurus (Bovine).